Here is a 350-residue protein sequence, read N- to C-terminus: Protein FAM118B (350 aa).

The residue at position 2 (alanine 2) is an N-acetylalanine. Phosphoserine is present on serine 9.

The protein belongs to the FAM118 family.

Its subcellular location is the nucleus. It localises to the cajal body. May play a role in Cajal bodies formation. The sequence is that of Protein FAM118B (FAM118B) from Macaca fascicularis (Crab-eating macaque).